Here is a 150-residue protein sequence, read N- to C-terminus: Flagellar assembly factor FliW (150 aa).

It belongs to the FliW family. Interacts with translational regulator CsrA and flagellin(s).

The protein localises to the cytoplasm. Acts as an anti-CsrA protein, binds CsrA and prevents it from repressing translation of its target genes, one of which is flagellin. Binds to flagellin and participates in the assembly of the flagellum. The polypeptide is Flagellar assembly factor FliW (Leptospira borgpetersenii serovar Hardjo-bovis (strain JB197)).